Consider the following 217-residue polypeptide: C-type lectin domain family 2 member I (217 aa).

Topologically, residues 1–53 (MPDCLETGEKLFVHNMNAQCVQKPEEGNGPLGTGGKIVQGKCFRIISTVSPVK) are cytoplasmic. Residues 54-74 (LYCCYGVIMVLTVAVIALSVA) traverse the membrane as a helical; Signal-anchor for type II membrane protein segment. At 75 to 217 (LSTKKTEQII…YNLHCQTPPV (143 aa)) the chain is on the extracellular side. The cysteines at positions 92 and 103 are disulfide-linked. The region spanning 99–203 (VGNKCFYFSG…SYINRMWICS (105 aa)) is the C-type lectin domain. Asn-112 carries an N-linked (GlcNAc...) asparagine glycan. The cysteines at positions 120 and 202 are disulfide-linked.

In terms of tissue distribution, detected in osteoblasts, growth plate chondrocytes and skeletal muscle overlying the bone (at protein level). Detected in spleen, B-cells, dendritic cells, thymus, and in IL2-activated natural killer cells.

The protein resides in the cell membrane. In terms of biological role, inhibits osteoclast formation. Receptor for KLRB1F. Enhances T-cell activation. Plays a role in splenocyte activation, T-cell responses and IL-2 production. This chain is C-type lectin domain family 2 member I (Clec2i), found in Mus musculus (Mouse).